Reading from the N-terminus, the 255-residue chain is Glycerol-3-phosphate regulon repressor (255 aa).

The 56-residue stretch at 3–58 folds into the HTH deoR-type domain; sequence QSLRHQKIIKLVEQSGYLSTEELVAALDVSPQTIRRDLNILAELDLIRRHHGGAAS. Positions 20-39 form a DNA-binding region, H-T-H motif; sequence LSTEELVAALDVSPQTIRRD.

Functionally, repressor of the glycerol-3-phosphate regulon. The chain is Glycerol-3-phosphate regulon repressor (glpR) from Haemophilus influenzae (strain ATCC 51907 / DSM 11121 / KW20 / Rd).